A 178-amino-acid polypeptide reads, in one-letter code: MVKLVATLGTSPGGVIESFLYLVKKGENIDEVRVVTTSNAEVKKAWRIVRLMFVCCIQEKFPKVEISEHPLDIEDIYSEDDLRKVREFVEKQLGEGDYLDITGGRKSMSVAAALAAKNKGVKIITSIIPQDDYNKISKKVRELKEIPEIKNRGECRQEMKETYCSLIVQDARSIEFEI.

Residues 105-106 (RK) form a transition state stabilizer region.

It belongs to the cOA ring nuclease family. In terms of assembly, homodimer. It depends on Does not require a metal cofactor. as a cofactor.

Its subcellular location is the cytoplasm. The enzyme catalyses cyclic tetraadenylate = 2 5'-hydroxy-diadenylate 2',3'-cylic phosphate. CRISPR (clustered regularly interspaced short palindromic repeat) is an adaptive immune system that provides protection against mobile genetic elements (viruses, transposable elements and conjugative plasmids). CRISPR clusters contain spacers, sequences complementary to antecedent mobile elements, and target invading nucleic acids. CRISPR clusters are transcribed and processed into CRISPR RNA (crRNA). A nuclease that degrades cyclic oligoadenylates (cOA), second messengers that induce an antiviral state important for defense against invading nucleic acids. Destruction of cOA deactivates the Csx1 ribonuclease, preventing uncontrolled degradation of cellular RNA. Degrades cA4 (a tetraadenylate ring) into a linear diadenylate product with 5'-OH and 2',3'-cyclic phosphate termini. Is 10-fold more active than SSO1393, suggesting this is the major cA4 degradation enzyme. Is highly specific for cA4; it has very poor activity on cA6 and no discernible activity against a number of cyclic dinucleotides. There may be 2 active sites per homodimer. The protein is CRISPR system ring nuclease SSO2081 of Saccharolobus solfataricus (strain ATCC 35092 / DSM 1617 / JCM 11322 / P2) (Sulfolobus solfataricus).